The chain runs to 511 residues: Maturase K (511 aa).

It belongs to the intron maturase 2 family. MatK subfamily.

The protein localises to the plastid. The protein resides in the chloroplast. In terms of biological role, usually encoded in the trnK tRNA gene intron. Probably assists in splicing its own and other chloroplast group II introns. This is Maturase K from Hordeum vulgare (Barley).